The chain runs to 332 residues: Mitochondrial glycine transporter (332 aa).

Solcar repeat units follow at residues 11–94 (SSSY…LRQN), 121–205 (LSNL…LKKR), and 235–319 (TSAS…LIRR). 6 helical membrane-spanning segments follow: residues 17–42 (FGAG…TRVQ), 69–95 (GTVP…RQNV), 127–152 (LTTG…VRYE), 180–203 (GFGA…EELK), 239–265 (INFG…KTRI), and 294–312 (GLGL…AWTI).

The protein belongs to the mitochondrial carrier (TC 2.A.29) family. SLC25A38 subfamily.

The protein resides in the mitochondrion inner membrane. It carries out the reaction glycine(in) = glycine(out). Mitochondrial glycine transporter that imports glycine into the mitochondrial matrix. Plays an important role in providing glycine for the first enzymatic step in heme biosynthesis, the condensation of glycine with succinyl-CoA to produce 5-aminolevulinate (ALA) in the mitochondrial matrix. This is Mitochondrial glycine transporter from Botryotinia fuckeliana (strain B05.10) (Noble rot fungus).